The chain runs to 316 residues: L-lactate dehydrogenase (316 aa).

NAD(+)-binding positions include Val15, Asp37, Lys42, Tyr68, and 82-83; that span reads GL. Substrate is bound by residues Gln85, Arg91, and 123 to 126; that span reads NPVD. NAD(+) contacts are provided by residues 121 to 123 and Thr146; that span reads ASN. 151 to 154 lines the substrate pocket; that stretch reads DTSR. Residues Arg156 and His171 each contribute to the beta-D-fructose 1,6-bisphosphate site. The active-site Proton acceptor is the His178. At Tyr222 the chain carries Phosphotyrosine. Thr231 provides a ligand contact to substrate.

The protein belongs to the LDH/MDH superfamily. LDH family. Homotetramer.

The protein localises to the cytoplasm. It carries out the reaction (S)-lactate + NAD(+) = pyruvate + NADH + H(+). Its pathway is fermentation; pyruvate fermentation to lactate; (S)-lactate from pyruvate: step 1/1. Allosterically activated by fructose 1,6-bisphosphate (FBP). Functionally, catalyzes the conversion of lactate to pyruvate. The protein is L-lactate dehydrogenase of Borreliella afzelii (strain PKo) (Borrelia afzelii).